The chain runs to 130 residues: Small ribosomal subunit protein uS8 (130 aa).

It belongs to the universal ribosomal protein uS8 family. In terms of assembly, part of the 30S ribosomal subunit. Contacts proteins S5 and S12.

In terms of biological role, one of the primary rRNA binding proteins, it binds directly to 16S rRNA central domain where it helps coordinate assembly of the platform of the 30S subunit. The polypeptide is Small ribosomal subunit protein uS8 (Vibrio cholerae serotype O1 (strain ATCC 39541 / Classical Ogawa 395 / O395)).